The following is a 92-amino-acid chain: Long neurotoxin 73 (92 aa).

A signal peptide spans 1-21 (MKTLLLTLVVVTIVCLDLGDS). 5 cysteine pairs are disulfide-bonded: Cys-24-Cys-41, Cys-34-Cys-62, Cys-47-Cys-51, Cys-66-Cys-77, and Cys-78-Cys-83.

Belongs to the three-finger toxin family. Long-chain subfamily. Type II alpha-neurotoxin sub-subfamily. In terms of tissue distribution, expressed by the venom gland.

The protein resides in the secreted. In terms of biological role, binds with high affinity to muscular (alpha-1/CHRNA1) and neuronal (alpha-7/CHRNA7) nicotinic acetylcholine receptor (nAChR) and inhibits acetylcholine from binding to the receptor, thereby impairing neuromuscular and neuronal transmission. The protein is Long neurotoxin 73 of Drysdalia coronoides (White-lipped snake).